Here is a 120-residue protein sequence, read N- to C-terminus: Large ribosomal subunit protein uL18 (120 aa).

The protein belongs to the universal ribosomal protein uL18 family. As to quaternary structure, part of the 50S ribosomal subunit; part of the 5S rRNA/L5/L18/L25 subcomplex. Contacts the 5S and 23S rRNAs.

In terms of biological role, this is one of the proteins that bind and probably mediate the attachment of the 5S RNA into the large ribosomal subunit, where it forms part of the central protuberance. The chain is Large ribosomal subunit protein uL18 from Bacillus licheniformis (strain ATCC 14580 / DSM 13 / JCM 2505 / CCUG 7422 / NBRC 12200 / NCIMB 9375 / NCTC 10341 / NRRL NRS-1264 / Gibson 46).